The following is a 471-amino-acid chain: Chitobiosyldiphosphodolichol beta-mannosyltransferase (471 aa).

Residues 1–31 are Lumenal-facing; it reads MDTSSVTMHTERACCHQAQRAVAAMLDKAPS. The helical transmembrane segment at 32–52 threads the bilayer; that stretch reads WLIWTAVLYVGLPFMLYWAVP. Over 53–126 the chain is Cytoplasmic; that stretch reads YLFYHNKTKS…ALPGASNAGK (74 aa). Positions 127 to 147 form an intramembrane region, helical; it reads SLGQTARKVVLQTCHIVRQLW. Over 148-471 the chain is Cytoplasmic; it reads ELRGCDYILI…MSELQVVRQS (324 aa).

Belongs to the glycosyltransferase group 1 family.

It is found in the endoplasmic reticulum membrane. The catalysed reaction is an N,N'-diacetylchitobiosyl-diphospho-di-trans,poly-cis-dolichol + GDP-alpha-D-mannose = a beta-D-Man-(1-&gt;4)-beta-D-GlcNAc-(1-&gt;4)-alpha-D-GlcNAc-diphospho-di-trans,poly-cis-dolichol + GDP + H(+). It participates in protein modification; protein glycosylation. Functionally, participates in the formation of the lipid-linked precursor oligosaccharide for N-glycosylation. Involved in assembling the dolichol-pyrophosphate-GlcNAc(2)-Man(5) intermediate on the cytoplasmic surface of the ER. The sequence is that of Chitobiosyldiphosphodolichol beta-mannosyltransferase (ALG1) from Eremothecium gossypii (strain ATCC 10895 / CBS 109.51 / FGSC 9923 / NRRL Y-1056) (Yeast).